A 78-amino-acid polypeptide reads, in one-letter code: Large ribosomal subunit protein bL28 (78 aa).

Residues Met1 to Lys24 are disordered.

Belongs to the bacterial ribosomal protein bL28 family.

This chain is Large ribosomal subunit protein bL28, found in Chromohalobacter salexigens (strain ATCC BAA-138 / DSM 3043 / CIP 106854 / NCIMB 13768 / 1H11).